The sequence spans 1063 residues: Structural polyprotein (1063 aa).

Residues 1-131 form a disordered region; the sequence is MASTTPITME…LGPPTNPFQA (131 aa). Residues 30-69 form a human C1QBP/SF2P32-binding region; that stretch reads GASQSRRPRPPRQRDSSTSGDDSGRDSGGPRRRRGNRGRG. Serine 46 is modified (phosphoserine; by host). Over residues 70-87 the composition is skewed to basic and acidic residues; that stretch reads QLRDWSRAPPPPEERQES. Pro residues predominate over residues 93–107; that stretch reads APKPSRAPPQQPQPP. An intrachain disulfide couples cysteine 153 to cysteine 197. The interval 279-300 is functions as E2 signal peptide; that stretch reads GAPQAFLAGLLLAAVAVGTARA. Over 301-534 the chain is Extracellular; the sequence is GLQPRADMAA…LWLATANALS (234 aa). 4 N-linked (GlcNAc...) asparagine; by host glycosylation sites follow: asparagine 353, asparagine 371, asparagine 410, and asparagine 429. A helical membrane pass occupies residues 535–555; sequence LDHALAAFVLLVPWVLIFMVC. The Cytoplasmic portion of the chain corresponds to 556-582; sequence RRACRRRGAAAALTAVVLQGYNPPAYG. Residues 563 to 582 are functions as E1 signal peptide; that stretch reads GAAAALTAVVLQGYNPPAYG. The Extracellular portion of the chain corresponds to 583–1028; that stretch reads EEAFTYLCTA…QTWAEWAAAH (446 aa). 8 cysteine pairs are disulfide-bonded: cysteine 590–cysteine 595, cysteine 619–cysteine 824, cysteine 641–cysteine 653, cysteine 699–cysteine 712, cysteine 758–cysteine 767, cysteine 807–cysteine 817, cysteine 931–cysteine 934, and cysteine 950–cysteine 983. An N-linked (GlcNAc...) asparagine; by host glycan is attached at asparagine 658. Positions 670 and 671 each coordinate Ca(2+). Residues aspartate 718 and threonine 719 each coordinate Ca(2+). N-linked (GlcNAc...) asparagine; by host glycans are attached at residues asparagine 759 and asparagine 791. Residues threonine 1011 and threonine 1012 are each glycosylated (O-linked (GalNAc...) threonine; by host). A helical transmembrane segment spans residues 1029 to 1049; that stretch reads WWQLTLGAICALLLAGLLACC. Over 1050–1063 the chain is Extracellular; it reads AKCLYYLRGAIAPR.

Homodimer; further assembles into homooligomer. Interacts with human C1QBP. Interacts (via N-terminus) with protease/methyltransferase p150. As to quaternary structure, heterodimer with spike glycoprotein E2. In terms of assembly, heterodimer with spike glycoprotein E1. Structural polyprotein: Specific enzymatic cleavages in vivo yield mature proteins. Two signal peptidase-mediated cleavages within the polyprotein produce the structural proteins capsid, E2, and E1. The E2 signal peptide remains attached to the C-terminus of the capsid protein after cleavage by the signal peptidase. Another signal peptide at E2 C-terminus directs E1 to the ER, with a similar mechanism. In terms of processing, contains three N-linked oligosaccharides. Post-translationally, capsid is phosphorylated on Ser-46 by host. This phosphorylation negatively regulates capsid protein RNA-binding activity. Dephosphorylated by human PP1A.

Its subcellular location is the virion. It is found in the host cytoplasm. The protein resides in the host mitochondrion. The protein localises to the virion membrane. It localises to the host Golgi apparatus membrane. Functionally, capsid protein interacts with genomic RNA and assembles into icosahedric core particles 65-70 nm in diameter. The resulting nucleocapsid eventually associates with the cytoplasmic domain of E2 at the cell membrane, leading to budding and formation of mature virions from host Golgi membranes. Phosphorylation negatively regulates RNA-binding activity, possibly delaying virion assembly during the viral replication phase. Capsid protein dimerizes and becomes disulfide-linked in the virion. Modulates genomic RNA replication. Modulates subgenomic RNA synthesis by interacting with human C1QBP/SF2P32. Induces both perinuclear clustering of mitochondria and the formation of electron-dense intermitochondrial plaques, both hallmarks of rubella virus infected cells. Induces apoptosis when expressed in transfected cells. Responsible for viral attachment to target host cell, by binding to the cell receptor. Its transport to the plasma membrane depends on interaction with E1 protein. The surface glycoproteins display an irregular helical organization and a pseudo-tetrameric inner nucleocapsid arrangement. In terms of biological role, class II viral fusion protein. Fusion activity is inactive as long as E1 is bound to E2 in mature virion. After virus attachment to target cell and clathrin-mediated endocytosis, acidification of the endosome would induce dissociation of E1/E2 heterodimer and concomitant trimerization of the E1 subunits. This E1 homotrimer is fusion active, and promotes release of viral nucleocapsid in cytoplasm after endosome and viral membrane fusion. The cytoplasmic tail of spike glycoprotein E1 modulates virus release. The surface glycoproteins display an irregular helical organization and a pseudo-tetrameric inner nucleocapsid arrangement. In Homo sapiens (Human), this protein is Structural polyprotein.